A 496-amino-acid chain; its full sequence is uncharacterized protein (496 aa).

The next 13 membrane-spanning stretches (helical) occupy residues 5 to 25, 45 to 65, 77 to 97, 127 to 147, 161 to 181, 193 to 213, 239 to 259, 278 to 298, 325 to 345, 374 to 394, 396 to 416, 424 to 444, and 450 to 470; these read LTAL…GFLA, FGGL…YTFL, VAFF…FFLP, LVAI…LSGI, VKFV…FSGI, ILVW…HFNG, IPWF…WAHA, FLPL…IAFL, FAYA…AIGA, MVFV…TALV, LQLL…VSLF, ATVI…ITQS, and EGFW…PLFV.

Belongs to the sodium:solute symporter (SSF) (TC 2.A.21) family.

The protein resides in the cell membrane. This is an uncharacterized protein from Bacillus subtilis (strain 168).